A 247-amino-acid chain; its full sequence is Phycobilisome rod-core linker polypeptide CpcG2 (247 aa).

Positions 11–189 constitute a PBS-linker domain; the sequence is SSQNQRVPGY…YWRDKLESER (179 aa). Positions 223 to 247 are disordered; sequence PDTTRNTTPTGIPISVNPSANFPVR.

The protein belongs to the phycobilisome linker protein family. Part of the phycobilisome, a hemidiscoidal structure that is composed of two distinct substructures: a core complex and a number of rods radiating from the core.

Its subcellular location is the cellular thylakoid membrane. In terms of biological role, rod-core linker protein required for attachment of phycocyanin to allophycocyanin in cores of phycobilisomes. Functionally, linker polypeptides determine the state of aggregation and the location of the disk-shaped phycobiliprotein units within the phycobilisome and modulate their spectroscopic properties in order to mediate a directed and optimal energy transfer. The protein is Phycobilisome rod-core linker polypeptide CpcG2 of Nostoc sp. (strain PCC 7120 / SAG 25.82 / UTEX 2576).